Consider the following 225-residue polypeptide: Cytochrome c oxidase subunit 2 (225 aa).

Residues 1–25 (MSTWMMFMFQESNSFYADNLVSFHN) lie on the Mitochondrial intermembrane side of the membrane. Residues 26-47 (LVMMIIIMISTLTIYIIFDLFM) form a helical membrane-spanning segment. Residues 48–62 (NKFSNLFLLKNHNIE) lie on the Mitochondrial matrix side of the membrane. A helical membrane pass occupies residues 63 to 82 (IIWTIVPIVILLIICFPSLK). Over 83 to 225 (ILYLIDEIIN…FFLNWINKQN (143 aa)) the chain is Mitochondrial intermembrane. Cu cation contacts are provided by histidine 159, cysteine 194, glutamate 196, cysteine 198, histidine 202, and methionine 205. Residue glutamate 196 participates in Mg(2+) binding.

This sequence belongs to the cytochrome c oxidase subunit 2 family. In terms of assembly, component of the cytochrome c oxidase (complex IV, CIV), a multisubunit enzyme composed of a catalytic core of 3 subunits and several supernumerary subunits. The complex exists as a monomer or a dimer and forms supercomplexes (SCs) in the inner mitochondrial membrane with ubiquinol-cytochrome c oxidoreductase (cytochrome b-c1 complex, complex III, CIII). Requires Cu cation as cofactor.

The protein localises to the mitochondrion inner membrane. It carries out the reaction 4 Fe(II)-[cytochrome c] + O2 + 8 H(+)(in) = 4 Fe(III)-[cytochrome c] + 2 H2O + 4 H(+)(out). In terms of biological role, component of the cytochrome c oxidase, the last enzyme in the mitochondrial electron transport chain which drives oxidative phosphorylation. The respiratory chain contains 3 multisubunit complexes succinate dehydrogenase (complex II, CII), ubiquinol-cytochrome c oxidoreductase (cytochrome b-c1 complex, complex III, CIII) and cytochrome c oxidase (complex IV, CIV), that cooperate to transfer electrons derived from NADH and succinate to molecular oxygen, creating an electrochemical gradient over the inner membrane that drives transmembrane transport and the ATP synthase. Cytochrome c oxidase is the component of the respiratory chain that catalyzes the reduction of oxygen to water. Electrons originating from reduced cytochrome c in the intermembrane space (IMS) are transferred via the dinuclear copper A center (CU(A)) of subunit 2 and heme A of subunit 1 to the active site in subunit 1, a binuclear center (BNC) formed by heme A3 and copper B (CU(B)). The BNC reduces molecular oxygen to 2 water molecules using 4 electrons from cytochrome c in the IMS and 4 protons from the mitochondrial matrix. The protein is Cytochrome c oxidase subunit 2 (COII) of Apis koschevnikovi (Koschevnikov's honey bee).